We begin with the raw amino-acid sequence, 131 residues long: Large-conductance mechanosensitive channel (131 aa).

3 helical membrane passes run 8–28 (FAMRGNVVDLAVGVIIGGAFG), 30–50 (IVSSLVNDILMPLVGLLLGGV), and 67–87 (GMFIQTVVDFFIISFSIFVFV).

The protein belongs to the MscL family. In terms of assembly, homopentamer.

The protein localises to the cell membrane. Functionally, channel that opens in response to stretch forces in the membrane lipid bilayer. May participate in the regulation of osmotic pressure changes within the cell. The protein is Large-conductance mechanosensitive channel of Geobacillus sp. (strain WCH70).